The following is a 408-amino-acid chain: MKLSASFAALALLLPFVQAQSPVWGQCGGIGWTGPTTCTAGNVCQEYSAYYSQCIPASQATSVTSVSTAPNPPPTSHTSTSSAPSGASTSTAKLNTLAKAKGKLYFGTATDNGELSDTAYTAILDDNTMFGQITPANSMKWDATEPQQGQFTFSGGDQIANLAKSNGMLLRGHNCVWYNQLPSWVSNGKFTAAQLTSIIQNHCSTLVTHYKGQVYAWDVVNEPFNDDGSWRTDVFYNTLGTSYVQIALEAARAADPDAKLYINEYNIEYAGAKATSLLNLVKTLKAASVPLDGIGFQSHFIVGQVPTGLQSQLTTFAAQGVEVAITELDIRMTLPSTPALLAQQKTDYSNVIKACASVEACVGVTVWDWTDKYSWVPNTFSGQGAACPWDQNFVRKPAYDGIAIGFGN.

An N-terminal signal peptide occupies residues 1–19 (MKLSASFAALALLLPFVQA). Residues 20 to 55 (QSPVWGQCGGIGWTGPTTCTAGNVCQEYSAYYSQCI) form the CBM1 domain. Residues 64-89 (TSVSTAPNPPPTSHTSTSSAPSGAST) form a disordered region. The segment covering 76–89 (SHTSTSSAPSGAST) has biased composition (low complexity). Residues 88–405 (STSTAKLNTL…KPAYDGIAIG (318 aa)) form the GH10 domain. Catalysis depends on Glu222, which acts as the Proton donor. Glu327 (nucleophile) is an active-site residue. Cys355 and Cys361 form a disulfide bridge.

It belongs to the glycosyl hydrolase 10 (cellulase F) family.

The protein resides in the secreted. The catalysed reaction is Endohydrolysis of (1-&gt;4)-beta-D-xylosidic linkages in xylans.. The protein operates within glycan degradation; xylan degradation. Its function is as follows. Endo-1,4-beta-xylanase involved in the hydrolysis of xylan, a major structural heterogeneous polysaccharide found in plant biomass representing the second most abundant polysaccharide in the biosphere, after cellulose. The polypeptide is Endo-1,4-beta-xylanase A (xynA) (Phanerodontia chrysosporium (White-rot fungus)).